Reading from the N-terminus, the 56-residue chain is Large ribosomal subunit protein bL32 (56 aa).

The segment covering 1–20 has biased composition (basic residues); that stretch reads MAVPKRRTSRSNTRSRRSQW. The segment at 1 to 24 is disordered; sequence MAVPKRRTSRSNTRSRRSQWKAKV.

It belongs to the bacterial ribosomal protein bL32 family.

The chain is Large ribosomal subunit protein bL32 from Frankia casuarinae (strain DSM 45818 / CECT 9043 / HFP020203 / CcI3).